A 342-amino-acid polypeptide reads, in one-letter code: MLKDQNLDIERKQDHIEINLTKNVESTLKSGFESIHFIHNALPEINYDSVNTTTTFLGKSLQAPILISSMTGGTTRARDINYRLAQVAQKAGIAMGLGSMRVLLTEPDTIKTFAVRHIAPDIPLLANIGAVQLNYGVTPKECQYLVDAIKADALILHLNVLQELTQPEGNRNWEKLLPKIREVVNYLSIPVIVKEVGYGLSKKVAESLIDAGVKVLDIAGSGGTSWSQVEAYRATNSLQNRIASSFINWGIPTLDSLKMVREVSKDIPIITSGGLKSGIDGAKAIRIGANIFGLAGQFLKAADTSESLLSEEIQLIIEQLKITMLCTGSRTLKDLAKAEIRL.

11-12 contacts substrate; sequence RK. FMN contacts are provided by residues Ser68, 69-71, Ser99, and Asn127; that span reads SMT. 99 to 101 is a substrate binding site; that stretch reads SMR. Substrate is bound at residue Gln162. Residue Glu163 coordinates Mg(2+). FMN-binding positions include Lys194, Thr224, 274–276, and 295–296; these read GLK and AG.

Belongs to the IPP isomerase type 2 family. In terms of assembly, homooctamer. Dimer of tetramers. FMN is required as a cofactor. NADPH serves as cofactor. Requires Mg(2+) as cofactor.

It localises to the cytoplasm. It catalyses the reaction isopentenyl diphosphate = dimethylallyl diphosphate. Functionally, involved in the biosynthesis of isoprenoids. Catalyzes the 1,3-allylic rearrangement of the homoallylic substrate isopentenyl (IPP) to its allylic isomer, dimethylallyl diphosphate (DMAPP). This chain is Isopentenyl-diphosphate delta-isomerase, found in Rickettsia africae (strain ESF-5).